We begin with the raw amino-acid sequence, 571 residues long: Potassium-transporting ATPase potassium-binding subunit (571 aa).

11 helical membrane-spanning segments follow: residues 5–25, 64–84, 136–156, 178–198, 254–274, 285–305, 330–350, 357–379, 421–441, 488–508, and 527–547; these read GWTQ…PLGW, LGYA…LYAI, GLTH…VALI, ILYV…WQGI, LSNF…TNVF, WAIL…AYWA, FDIA…CGAV, FTAL…IGGV, MLGI…ATVL, LAVG…AIAG, and GALF…LTFF.

The protein belongs to the KdpA family. As to quaternary structure, the system is composed of three essential subunits: KdpA, KdpB and KdpC.

The protein localises to the cell inner membrane. In terms of biological role, part of the high-affinity ATP-driven potassium transport (or Kdp) system, which catalyzes the hydrolysis of ATP coupled with the electrogenic transport of potassium into the cytoplasm. This subunit binds the periplasmic potassium ions and delivers the ions to the membrane domain of KdpB through an intramembrane tunnel. This is Potassium-transporting ATPase potassium-binding subunit from Methylobacterium nodulans (strain LMG 21967 / CNCM I-2342 / ORS 2060).